The chain runs to 493 residues: Dipeptide permease D (493 aa).

The next 13 membrane-spanning stretches (helical) occupy residues 14-34 (VVAL…LLIL), 49-69 (ELFS…GYLA), 91-111 (LVLG…AIIV), 138-158 (GGFS…PIAC), 167-187 (WAMG…IFLC), 212-232 (NWGW…VLFW), 235-255 (WSVY…AKIY), 267-287 (LGLI…AQQG), 312-332 (MFQS…AWLV), 344-364 (IWGK…ILTL), 379-399 (LMVL…PVAM), 413-433 (VLTG…AGVI), and 458-478 (VFEQ…LIWL).

This sequence belongs to the major facilitator superfamily. Proton-dependent oligopeptide transporter (POT/PTR) (TC 2.A.17) family. DtpD subfamily.

The protein localises to the cell inner membrane. Functionally, probable proton-dependent permease that transports dipeptides. In Salmonella typhimurium (strain 14028s / SGSC 2262), this protein is Dipeptide permease D.